The primary structure comprises 124 residues: Small ribosomal subunit protein uS12 (124 aa).

The tract at residues 1 to 23 is disordered; the sequence is MATINQLVRKPRKRPVAKSDVPA. Residue D89 is modified to 3-methylthioaspartic acid. Residues 101–124 are disordered; sequence ALDTSGVQNRRQGRSKYGTKRPKS. The segment covering 111–124 has biased composition (basic residues); that stretch reads RQGRSKYGTKRPKS.

Belongs to the universal ribosomal protein uS12 family. In terms of assembly, part of the 30S ribosomal subunit. Contacts proteins S8 and S17. May interact with IF1 in the 30S initiation complex.

In terms of biological role, with S4 and S5 plays an important role in translational accuracy. Functionally, interacts with and stabilizes bases of the 16S rRNA that are involved in tRNA selection in the A site and with the mRNA backbone. Located at the interface of the 30S and 50S subunits, it traverses the body of the 30S subunit contacting proteins on the other side and probably holding the rRNA structure together. The combined cluster of proteins S8, S12 and S17 appears to hold together the shoulder and platform of the 30S subunit. The polypeptide is Small ribosomal subunit protein uS12 (Chromohalobacter salexigens (strain ATCC BAA-138 / DSM 3043 / CIP 106854 / NCIMB 13768 / 1H11)).